The primary structure comprises 407 residues: Arrestin domain-containing protein 2 (407 aa).

It belongs to the arrestin family. In terms of assembly, interacts with WWP1 (via WW domains).

The chain is Arrestin domain-containing protein 2 (Arrdc2) from Mus musculus (Mouse).